The primary structure comprises 756 residues: 5-methyltetrahydropteroyltriglutamate--homocysteine methyltransferase (756 aa).

Residues R16–K19 and K112 contribute to the 5-methyltetrahydropteroyltri-L-glutamate site. Residues I432–S434 and E485 each bind L-homocysteine. Residues I432–S434 and E485 contribute to the L-methionine site. Residues R516–C517 and W562 contribute to the 5-methyltetrahydropteroyltri-L-glutamate site. L-homocysteine is bound at residue D600. Residue D600 coordinates L-methionine. E606 contacts 5-methyltetrahydropteroyltri-L-glutamate. Residues H642, C644, and E666 each coordinate Zn(2+). The active-site Proton donor is H695. A Zn(2+)-binding site is contributed by C727.

This sequence belongs to the vitamin-B12 independent methionine synthase family. The cofactor is Zn(2+).

It carries out the reaction 5-methyltetrahydropteroyltri-L-glutamate + L-homocysteine = tetrahydropteroyltri-L-glutamate + L-methionine. Its pathway is amino-acid biosynthesis; L-methionine biosynthesis via de novo pathway; L-methionine from L-homocysteine (MetE route): step 1/1. Functionally, catalyzes the transfer of a methyl group from 5-methyltetrahydrofolate to homocysteine resulting in methionine formation. The sequence is that of 5-methyltetrahydropteroyltriglutamate--homocysteine methyltransferase from Haemophilus influenzae (strain ATCC 51907 / DSM 11121 / KW20 / Rd).